Here is a 510-residue protein sequence, read N- to C-terminus: Light-independent protochlorophyllide reductase subunit B (510 aa).

Asp36 serves as a coordination point for [4Fe-4S] cluster. The active-site Proton donor is the Asp296. Residue 431–432 participates in substrate binding; it reads GM.

The protein belongs to the ChlB/BchB/BchZ family. In terms of assembly, protochlorophyllide reductase is composed of three subunits; ChlL, ChlN and ChlB. Forms a heterotetramer of two ChlB and two ChlN subunits. Requires [4Fe-4S] cluster as cofactor.

The protein resides in the plastid. The protein localises to the chloroplast. The enzyme catalyses chlorophyllide a + oxidized 2[4Fe-4S]-[ferredoxin] + 2 ADP + 2 phosphate = protochlorophyllide a + reduced 2[4Fe-4S]-[ferredoxin] + 2 ATP + 2 H2O. The protein operates within porphyrin-containing compound metabolism; chlorophyll biosynthesis (light-independent). Component of the dark-operative protochlorophyllide reductase (DPOR) that uses Mg-ATP and reduced ferredoxin to reduce ring D of protochlorophyllide (Pchlide) to form chlorophyllide a (Chlide). This reaction is light-independent. The NB-protein (ChlN-ChlB) is the catalytic component of the complex. This chain is Light-independent protochlorophyllide reductase subunit B, found in Physcomitrium patens (Spreading-leaved earth moss).